Here is a 246-residue protein sequence, read N- to C-terminus: Triosephosphate isomerase (246 aa).

N9–K11 is a binding site for substrate. H91 acts as the Electrophile in catalysis. E161 functions as the Proton acceptor in the catalytic mechanism. Residues G167, S206, and G227 to G228 contribute to the substrate site.

Belongs to the triosephosphate isomerase family. As to quaternary structure, homodimer.

The protein resides in the cytoplasm. It carries out the reaction D-glyceraldehyde 3-phosphate = dihydroxyacetone phosphate. The protein operates within carbohydrate biosynthesis; gluconeogenesis. It participates in carbohydrate degradation; glycolysis; D-glyceraldehyde 3-phosphate from glycerone phosphate: step 1/1. In terms of biological role, involved in the gluconeogenesis. Catalyzes stereospecifically the conversion of dihydroxyacetone phosphate (DHAP) to D-glyceraldehyde-3-phosphate (G3P). This is Triosephosphate isomerase from Ruegeria sp. (strain TM1040) (Silicibacter sp.).